Reading from the N-terminus, the 286-residue chain is 2,3,4,5-tetrahydropyridine-2,6-dicarboxylate N-succinyltransferase (286 aa).

R109 and D146 together coordinate substrate.

The protein belongs to the transferase hexapeptide repeat family. In terms of assembly, homotrimer.

It is found in the cytoplasm. It carries out the reaction (S)-2,3,4,5-tetrahydrodipicolinate + succinyl-CoA + H2O = (S)-2-succinylamino-6-oxoheptanedioate + CoA. Its pathway is amino-acid biosynthesis; L-lysine biosynthesis via DAP pathway; LL-2,6-diaminopimelate from (S)-tetrahydrodipicolinate (succinylase route): step 1/3. In Bartonella tribocorum (strain CIP 105476 / IBS 506), this protein is 2,3,4,5-tetrahydropyridine-2,6-dicarboxylate N-succinyltransferase.